The chain runs to 146 residues: Aspartate carbamoyltransferase regulatory chain (146 aa).

Positions 102, 107, 131, and 134 each coordinate Zn(2+).

Belongs to the PyrI family. Contains catalytic and regulatory chains. The cofactor is Zn(2+).

Involved in allosteric regulation of aspartate carbamoyltransferase. This chain is Aspartate carbamoyltransferase regulatory chain, found in Clostridium acetobutylicum (strain ATCC 824 / DSM 792 / JCM 1419 / IAM 19013 / LMG 5710 / NBRC 13948 / NRRL B-527 / VKM B-1787 / 2291 / W).